Reading from the N-terminus, the 276-residue chain is Phosphate import ATP-binding protein PstB (276 aa).

In terms of domain architecture, ABC transporter spans 23-271 (VNNKNIVYDT…PSDQRTEDYI (249 aa)). Residue 62 to 69 (GPSGCGKS) coordinates ATP.

It belongs to the ABC transporter superfamily. Phosphate importer (TC 3.A.1.7) family. As to quaternary structure, the complex is composed of two ATP-binding proteins (PstB), two transmembrane proteins (PstC and PstA) and a solute-binding protein (PstS).

Its subcellular location is the cell membrane. It catalyses the reaction phosphate(out) + ATP + H2O = ADP + 2 phosphate(in) + H(+). Its function is as follows. Part of the ABC transporter complex PstSACB involved in phosphate import. Responsible for energy coupling to the transport system. The sequence is that of Phosphate import ATP-binding protein PstB from Oceanobacillus iheyensis (strain DSM 14371 / CIP 107618 / JCM 11309 / KCTC 3954 / HTE831).